Here is a 314-residue protein sequence, read N- to C-terminus: RNA 2',3'-cyclic phosphodiesterase (314 aa).

The active-site Proton donor is the His-43. Short sequence motifs (HXTX) lie at residues 43–46 (HITL) and 129–132 (HITI). The active-site Proton acceptor is the His-129.

This sequence belongs to the 2H phosphoesterase superfamily. ThpR family.

The enzyme catalyses a 3'-end 2',3'-cyclophospho-ribonucleotide-RNA + H2O = a 3'-end 2'-phospho-ribonucleotide-RNA + H(+). Its function is as follows. Hydrolyzes RNA 2',3'-cyclic phosphodiester to an RNA 2'-phosphomonoester. This is RNA 2',3'-cyclic phosphodiesterase from Geobacillus stearothermophilus (Bacillus stearothermophilus).